The following is a 138-amino-acid chain: uncharacterized protein (138 aa).

Its subcellular location is the plastid. It is found in the chloroplast. This is an uncharacterized protein from Chlorella vulgaris (Green alga).